Consider the following 539-residue polypeptide: NADH-quinone oxidoreductase subunit N 2 (539 aa).

The next 13 helical transmembrane spans lie at 11-31 (LIPE…DVLT), 52-72 (LMGL…FSWM), 106-126 (PLTH…VILT), 141-161 (LILF…LIMI), 193-213 (YIFG…LLGL), 248-268 (GVAI…VAIV), 296-316 (AGFF…SILG), 329-349 (WTSL…LAAL), 357-377 (MLAY…VGTQ), 385-405 (LMYL…LALV), 429-449 (LLLT…GFFV), 462-484 (AKWL…LRFL), and 500-520 (VGFG…GLGI).

This sequence belongs to the complex I subunit 2 family. In terms of assembly, NDH-1 is composed of 14 different subunits. Subunits NuoA, H, J, K, L, M, N constitute the membrane sector of the complex.

Its subcellular location is the cell membrane. The enzyme catalyses a quinone + NADH + 5 H(+)(in) = a quinol + NAD(+) + 4 H(+)(out). Functionally, NDH-1 shuttles electrons from NADH, via FMN and iron-sulfur (Fe-S) centers, to quinones in the respiratory chain. The immediate electron acceptor for the enzyme in this species is believed to be ubiquinone. Couples the redox reaction to proton translocation (for every two electrons transferred, four hydrogen ions are translocated across the cytoplasmic membrane), and thus conserves the redox energy in a proton gradient. The chain is NADH-quinone oxidoreductase subunit N 2 from Herpetosiphon aurantiacus (strain ATCC 23779 / DSM 785 / 114-95).